Consider the following 97-residue polypeptide: uncharacterized protein (97 aa).

This is an uncharacterized protein from Mycoplasma capricolum subsp. capricolum (strain California kid / ATCC 27343 / NCTC 10154).